The chain runs to 146 residues: Acireductone dioxygenase (146 aa).

His-71, His-73, Glu-77, and His-116 together coordinate Fe(2+). Residues His-71, His-73, Glu-77, and His-116 each contribute to the Ni(2+) site.

This sequence belongs to the acireductone dioxygenase (ARD) family. The cofactor is Fe(2+). Requires Ni(2+) as cofactor.

It is found in the cytoplasm. Its subcellular location is the nucleus. The enzyme catalyses 1,2-dihydroxy-5-(methylsulfanyl)pent-1-en-3-one + O2 = 4-methylsulfanyl-2-oxobutanoate + formate + 2 H(+). It catalyses the reaction 1,2-dihydroxy-5-(methylsulfanyl)pent-1-en-3-one + O2 = 3-(methylsulfanyl)propanoate + CO + formate + 2 H(+). It functions in the pathway amino-acid biosynthesis; L-methionine biosynthesis via salvage pathway; L-methionine from S-methyl-5-thio-alpha-D-ribose 1-phosphate: step 5/6. Its function is as follows. Catalyzes 2 different reactions between oxygen and the acireductone 1,2-dihydroxy-3-keto-5-methylthiopentene (DHK-MTPene) depending upon the metal bound in the active site. Fe-containing acireductone dioxygenase (Fe-ARD) produces formate and 2-keto-4-methylthiobutyrate (KMTB), the alpha-ketoacid precursor of methionine in the methionine recycle pathway. Ni-containing acireductone dioxygenase (Ni-ARD) produces methylthiopropionate, carbon monoxide and formate, and does not lie on the methionine recycle pathway. This chain is Acireductone dioxygenase, found in Heterostelium pallidum (strain ATCC 26659 / Pp 5 / PN500) (Cellular slime mold).